We begin with the raw amino-acid sequence, 248 residues long: NAD kinase (248 aa).

Asp45 serves as the catalytic Proton acceptor. Residues 45 to 46, Arg50, 110 to 111, and Asp138 contribute to the NAD(+) site; these read DG and NE.

The protein belongs to the NAD kinase family. A divalent metal cation is required as a cofactor.

It is found in the cytoplasm. The enzyme catalyses NAD(+) + ATP = ADP + NADP(+) + H(+). In terms of biological role, involved in the regulation of the intracellular balance of NAD and NADP, and is a key enzyme in the biosynthesis of NADP. Catalyzes specifically the phosphorylation on 2'-hydroxyl of the adenosine moiety of NAD to yield NADP. The protein is NAD kinase of Sulfurisphaera tokodaii (strain DSM 16993 / JCM 10545 / NBRC 100140 / 7) (Sulfolobus tokodaii).